A 223-amino-acid chain; its full sequence is Large ribosomal subunit protein uL3 (223 aa).

The interval 137–157 (GRASHGNSRSHNVPGSIGMAQ) is disordered. Position 157 is an N5-methylglutamine (glutamine 157).

Belongs to the universal ribosomal protein uL3 family. Part of the 50S ribosomal subunit. Forms a cluster with proteins L14 and L19. In terms of processing, methylated by PrmB.

One of the primary rRNA binding proteins, it binds directly near the 3'-end of the 23S rRNA, where it nucleates assembly of the 50S subunit. This is Large ribosomal subunit protein uL3 from Burkholderia pseudomallei (strain 1106a).